The following is a 545-amino-acid chain: Threonine--tRNA ligase catalytic subunit (545 aa).

The interval 139 to 433 is catalytic; it reads DHRLIGEKLD…LLEHFKGKLP (295 aa). Zn(2+) is bound by residues C231, H282, and H410.

Belongs to the class-II aminoacyl-tRNA synthetase family. In terms of assembly, homodimer. Probably interacts with its editing subunit. Requires Zn(2+) as cofactor.

The protein localises to the cytoplasm. The enzyme catalyses tRNA(Thr) + L-threonine + ATP = L-threonyl-tRNA(Thr) + AMP + diphosphate + H(+). Functionally, catalyzes the attachment of threonine to tRNA(Thr) in a two-step reaction: L-threonine is first activated by ATP to form Thr-AMP and then transferred to the acceptor end of tRNA(Thr). Also activates L-serine and transfers it to tRNA(Thr) but cannot deacylate incorrectly charged amino acid; unlike most archaea the editing function is found in a freestanding protein. The polypeptide is Threonine--tRNA ligase catalytic subunit (Saccharolobus islandicus (strain M.16.4 / Kamchatka #3) (Sulfolobus islandicus)).